The primary structure comprises 112 residues: Pediocin PA-1 immunity protein (112 aa).

Functionally, imparts immunity to pediocin PA-1/ACH to naturally sensitive host strains. This chain is Pediocin PA-1 immunity protein (pedB), found in Pediococcus acidilactici.